We begin with the raw amino-acid sequence, 1018 residues long: Serine/threonine-protein phosphatase BSL2 (1018 aa).

Residues 1–75 (MDEDSSMVAD…AAAVVGQEQQ (75 aa)) form a disordered region. Residues 41–57 (SPPPEGGSVPTPPPSDP) show a composition bias toward pro residues. The span at 63–75 (QQQAAAVVGQEQQ) shows a compositional bias: low complexity. Kelch repeat units lie at residues 149–195 (TSAG…VATA), 253–301 (YLMA…TASA), 306–356 (LLLL…VFVN), 362–409 (SGGA…DAAG), and 430–479 (LIFI…RLPG). The tract at residues 569–590 (DRDCGAEATPSGKPTFSLIKPD) is disordered. Ser-627 bears the Phosphoserine mark. Residues Asp-720, His-722, Asp-754, and Asn-786 each coordinate Mn(2+). His-787 (proton donor) is an active-site residue. Mn(2+) contacts are provided by His-839 and His-918. Ser-975 bears the Phosphoserine mark. The span at 994-1011 (ANRPATPTRGRPQNSNDR) shows a compositional bias: polar residues. A disordered region spans residues 994-1018 (ANRPATPTRGRPQNSNDRGGSLAWM).

This sequence belongs to the PPP phosphatase family. BSU subfamily. As to quaternary structure, interacts with BSK8. Requires Mn(2+) as cofactor. Expressed throughout the plant, with a higher level in younger parts.

It localises to the cytoplasm. It is found in the cell membrane. The protein resides in the nucleus. The enzyme catalyses O-phospho-L-seryl-[protein] + H2O = L-seryl-[protein] + phosphate. It carries out the reaction O-phospho-L-threonyl-[protein] + H2O = L-threonyl-[protein] + phosphate. Its function is as follows. Phosphatase involved in elongation process, probably by acting as a regulator of brassinolide signaling. This is Serine/threonine-protein phosphatase BSL2 (BSL2) from Arabidopsis thaliana (Mouse-ear cress).